Here is a 237-residue protein sequence, read N- to C-terminus: MAPKKVLLALTSYNDVFYSDGAKTGVFVVEALHPFNTFRKEGFEVDFVSETGKFGWDEHSLAKDFLNGQDETDFKNKDSDFNKTLAKIKTPKEVNADDYQIFFASAGHGTLFDYPKAKDLQDIASEIYANGGVVAAVCHGPAIFDGLTDKKTGRPLIEGKSITGFTDVGETILGVDSILKAKNLATVEDVAKKYGAKYLAPVGPWDDYSITDGRLVTGVNPASAHSTAVRSIDALKN.

Residues cysteine 138, histidine 139, and glutamate 170 contribute to the active site. A Cysteine sulfinic acid (-SO2H) modification is found at cysteine 138.

Belongs to the peptidase C56 family. HSP31-like subfamily. As to quaternary structure, homodimer. Post-translationally, cys-138 is easily oxidized to sulfinic acid.

The protein resides in the cytoplasm. It is found in the P-body. The enzyme catalyses methylglyoxal + H2O = (R)-lactate + H(+). Its function is as follows. Catalyzes the conversion of methylglyoxal (MG) to D-lactate in a single glutathione (GSH)-independent step. May play a role in detoxifying endogenously produced glyoxals. Involved in protection against reactive oxygen species (ROS). Important for viability in stationary phase. May negatively regulate TORC1 in response to nutrient limitation. This chain is Glutathione-independent glyoxalase HSP31, found in Saccharomyces cerevisiae (strain ATCC 204508 / S288c) (Baker's yeast).